Consider the following 149-residue polypeptide: METQRASLCLGRWSLWLLLLALVVPSASAQALSYREAVLRAVDRLNEQSSEANLYRLLELDQPPKADEDPGTPKPVSFTVKETVCPRPTRQPPELCDFKENGRVKQCVGTVTLDQIKDPLDITCNEVQGVRGGRLCYCRGWICFCVGRG.

A signal peptide spans 1-29 (METQRASLCLGRWSLWLLLLALVVPSASA). Positions 30 to 130 (QALSYREAVL…DITCNEVQGV (101 aa)) are excised as a propeptide. Residues 61–80 (DQPPKADEDPGTPKPVSFTV) are disordered. Intrachain disulfides connect Cys85–Cys96, Cys107–Cys124, Cys136–Cys145, and Cys138–Cys143. Arg148 bears the Arginine amide mark.

Belongs to the cathelicidin family.

The protein localises to the secreted. Functionally, microbicidal activity. This chain is Protegrin-4 (NPG4), found in Sus scrofa (Pig).